The following is a 455-amino-acid chain: Pup--protein ligase (455 aa).

Residue Glu-10 coordinates Mg(2+). Arg-55 serves as a coordination point for ATP. Tyr-57 is a binding site for Mg(2+). Catalysis depends on Asp-59, which acts as the Proton acceptor. Glu-65 contributes to the Mg(2+) binding site. The ATP site is built by Thr-68 and Trp-422.

Belongs to the Pup ligase/Pup deamidase family. Pup-conjugating enzyme subfamily.

It carries out the reaction ATP + [prokaryotic ubiquitin-like protein]-L-glutamate + [protein]-L-lysine = ADP + phosphate + N(6)-([prokaryotic ubiquitin-like protein]-gamma-L-glutamyl)-[protein]-L-lysine.. Its pathway is protein degradation; proteasomal Pup-dependent pathway. It participates in protein modification; protein pupylation. Catalyzes the covalent attachment of the prokaryotic ubiquitin-like protein modifier Pup to the proteasomal substrate proteins, thereby targeting them for proteasomal degradation. This tagging system is termed pupylation. The ligation reaction involves the side-chain carboxylate of the C-terminal glutamate of Pup and the side-chain amino group of a substrate lysine. This chain is Pup--protein ligase, found in Sanguibacter keddieii (strain ATCC 51767 / DSM 10542 / NCFB 3025 / ST-74).